Reading from the N-terminus, the 360-residue chain is Photosystem II protein D1 (360 aa).

The next 3 membrane-spanning stretches (helical) occupy residues 29–46 (YIGW…TATT), 118–133 (HFLL…EWEL), and 142–156 (WIFV…AASA). Position 118 (histidine 118) interacts with chlorophyll a. A pheophytin a-binding site is contributed by tyrosine 126. Residues aspartate 170 and glutamate 189 each contribute to the [CaMn4O5] cluster site. The helical transmembrane segment at 197 to 218 (FHMAGVAGVFGGSLFSAMHGSL) threads the bilayer. Histidine 198 is a chlorophyll a binding site. Residues histidine 215 and 264–265 (SF) contribute to the a quinone site. Histidine 215 serves as a coordination point for Fe cation. Residue histidine 272 participates in Fe cation binding. The helical transmembrane segment at 274-288 (FLAAWPVVRIWLTAL) threads the bilayer. [CaMn4O5] cluster contacts are provided by histidine 332, glutamate 333, aspartate 342, and alanine 344. The propeptide occupies 345–360 (AGEVLPVAVSAPAVHA).

This sequence belongs to the reaction center PufL/M/PsbA/D family. In terms of assembly, PSII is composed of 1 copy each of membrane proteins PsbA, PsbB, PsbC, PsbD, PsbE, PsbF, PsbH, PsbI, PsbJ, PsbK, PsbL, PsbM, PsbT, PsbX, PsbY, PsbZ, Psb30/Ycf12, at least 3 peripheral proteins of the oxygen-evolving complex and a large number of cofactors. It forms dimeric complexes. It depends on The D1/D2 heterodimer binds P680, chlorophylls that are the primary electron donor of PSII, and subsequent electron acceptors. It shares a non-heme iron and each subunit binds pheophytin, quinone, additional chlorophylls, carotenoids and lipids. D1 provides most of the ligands for the Mn4-Ca-O5 cluster of the oxygen-evolving complex (OEC). There is also a Cl(-1) ion associated with D1 and D2, which is required for oxygen evolution. The PSII complex binds additional chlorophylls, carotenoids and specific lipids. as a cofactor. Tyr-161 forms a radical intermediate that is referred to as redox-active TyrZ, YZ or Y-Z. In terms of processing, C-terminally processed by CTPA; processing is essential to allow assembly of the oxygen-evolving complex and thus photosynthetic growth.

The protein resides in the plastid. It localises to the chloroplast thylakoid membrane. It carries out the reaction 2 a plastoquinone + 4 hnu + 2 H2O = 2 a plastoquinol + O2. Functionally, photosystem II (PSII) is a light-driven water:plastoquinone oxidoreductase that uses light energy to abstract electrons from H(2)O, generating O(2) and a proton gradient subsequently used for ATP formation. It consists of a core antenna complex that captures photons, and an electron transfer chain that converts photonic excitation into a charge separation. The D1/D2 (PsbA/PsbD) reaction center heterodimer binds P680, the primary electron donor of PSII as well as several subsequent electron acceptors. The chain is Photosystem II protein D1 from Bumilleriopsis filiformis (Yellow-green alga).